We begin with the raw amino-acid sequence, 458 residues long: Light-independent protochlorophyllide reductase subunit N (458 aa).

C20, C45, and C105 together coordinate [4Fe-4S] cluster.

Belongs to the BchN/ChlN family. In terms of assembly, protochlorophyllide reductase is composed of three subunits; ChlL, ChlN and ChlB. Forms a heterotetramer of two ChlB and two ChlN subunits. Requires [4Fe-4S] cluster as cofactor.

The protein localises to the plastid. It is found in the chloroplast. The enzyme catalyses chlorophyllide a + oxidized 2[4Fe-4S]-[ferredoxin] + 2 ADP + 2 phosphate = protochlorophyllide a + reduced 2[4Fe-4S]-[ferredoxin] + 2 ATP + 2 H2O. It functions in the pathway porphyrin-containing compound metabolism; chlorophyll biosynthesis (light-independent). Functionally, component of the dark-operative protochlorophyllide reductase (DPOR) that uses Mg-ATP and reduced ferredoxin to reduce ring D of protochlorophyllide (Pchlide) to form chlorophyllide a (Chlide). This reaction is light-independent. The NB-protein (ChlN-ChlB) is the catalytic component of the complex. This chain is Light-independent protochlorophyllide reductase subunit N, found in Angiopteris evecta (Mule's foot fern).